We begin with the raw amino-acid sequence, 678 residues long: AAC-rich mRNA clone AAC4 protein (678 aa).

Residues 55–73 (NNNNNNNNNNNNNNNNNNN) are compositionally biased toward low complexity. The interval 55–75 (NNNNNNNNNNNNNNNNNNNTS) is disordered. Residues 243–263 (IIPIYHEIILVLCNWLVVAFY) traverse the membrane as a helical segment. Residues 318–346 (NNNNNNNNNNNNNNNNNNNNNNNNKTNNN) are compositionally biased toward low complexity. The tract at residues 318 to 347 (NNNNNNNNNNNNNNNNNNNNNNNNKTNNNQ) is disordered.

The protein localises to the membrane. This is AAC-rich mRNA clone AAC4 protein (AAC4) from Dictyostelium discoideum (Social amoeba).